Reading from the N-terminus, the 496-residue chain is Probable G-protein coupled receptor K01A12.3 (496 aa).

The Extracellular portion of the chain corresponds to 1–19 (MESVTRHRADMISFFTFDS). The helical transmembrane segment at 20–40 (YISIVGVAYTAVGLLGVFCNV) threads the bilayer. At 41–58 (TTVIMILTNRVFRLSAYT) the chain is on the cytoplasmic side. The helical transmembrane segment at 59-79 (IMANVALADSIVMLIAGVACG) threads the bilayer. The Extracellular segment spans residues 80 to 128 (MDVMWPNPNDLTSFIPSLEEPYQKIAPVSLRNDSKTDSSAAGFETGNIH). N-linked (GlcNAc...) asparagine glycosylation is present at Asn111. A helical transmembrane segment spans residues 129 to 149 (AVLSFSFVAAWTAGVISYAML). Topologically, residues 150–169 (GTNRCIAICYYGTKARALNQ) are cytoplasmic. The helical transmembrane segment at 170-190 (VSVAVACSASTWIVGIAAALV) threads the bilayer. At 191–216 (GTLSQPMIGIQRTMWSISFLEPRPHT) the chain is on the extracellular side. The chain crosses the membrane as a helical span at residues 217–237 (TLFFTLLCAANLLGLGAQWVC). Residues 238-285 (STLVLLKIRQVKKKISKNKLNQNSANRFRKQVILALNEIIVTGNFKAR) are Cytoplasmic-facing. Residues 286 to 306 (LTFQFFYPSILCTISTFLFFI) form a helical membrane-spanning segment. The Extracellular segment spans residues 307 to 318 (KPYAFEYLSGWQ). The helical transmembrane segment at 319 to 339 (LVILHLLWLCNHTCNPFIYAY) threads the bilayer. Residues 340–496 (FNDRMRLTYK…WVKFAKKASI (157 aa)) lie on the Cytoplasmic side of the membrane. The segment at 451–470 (TKELESAHNQGGSSRFDSER) is disordered.

This sequence belongs to the G-protein coupled receptor 1 family.

The protein localises to the cell membrane. The protein is Probable G-protein coupled receptor K01A12.3 of Caenorhabditis elegans.